The following is a 151-amino-acid chain: Transcriptional repressor NrdR (151 aa).

A zinc finger spans residues 3–34 (CPFCNAQDTKVIDSRLVSEGSQVRRRRSCNEC). The 91-residue stretch at 49-139 (PRLIKSDGRR…VYRSFKDVKE (91 aa)) folds into the ATP-cone domain.

Belongs to the NrdR family. The cofactor is Zn(2+).

Functionally, negatively regulates transcription of bacterial ribonucleotide reductase nrd genes and operons by binding to NrdR-boxes. The chain is Transcriptional repressor NrdR from Psychromonas ingrahamii (strain DSM 17664 / CCUG 51855 / 37).